The sequence spans 126 residues: Fluoride-specific ion channel FluC (126 aa).

4 consecutive transmembrane segments (helical) span residues 6–26 (FVAV…FAVL), 36–56 (YGTL…VGFF), 69–89 (LAIT…SEVV), and 99–119 (WAGL…AFGL). Residues Gly-76 and Thr-79 each coordinate Na(+).

This sequence belongs to the fluoride channel Fluc/FEX (TC 1.A.43) family.

It localises to the cell inner membrane. The catalysed reaction is fluoride(in) = fluoride(out). Its activity is regulated as follows. Na(+) is not transported, but it plays an essential structural role and its presence is essential for fluoride channel function. Fluoride-specific ion channel. Important for reducing fluoride concentration in the cell, thus reducing its toxicity. The protein is Fluoride-specific ion channel FluC of Cupriavidus necator (strain ATCC 17699 / DSM 428 / KCTC 22496 / NCIMB 10442 / H16 / Stanier 337) (Ralstonia eutropha).